The sequence spans 464 residues: Protein FAM90A26 (464 aa).

Disordered stretches follow at residues 1-42 (MMAC…DPRL), 70-293 (PPTL…AKRP), 312-390 (PFQI…DGAQ), and 410-442 (AAPS…VRVP). Composition is skewed to basic and acidic residues over residues 74 to 83 (GKKEGKENLK) and 97 to 114 (NKDK…DPQR). The segment covering 178–197 (SALASLSPLRKASLSSSSSL) has biased composition (low complexity).

This sequence belongs to the FAM90 family.

In Homo sapiens (Human), this protein is Protein FAM90A26.